A 359-amino-acid polypeptide reads, in one-letter code: Alpha-2-HS-glycoprotein (359 aa).

The signal sequence occupies residues 1–18 (MKSFVLLFCLAQLWGCHS). The Cystatin fetuin-A-type 1 domain maps to 27 to 133 (YKEPACDDPD…QFSVLFTKCD (107 aa)). 6 disulfides stabilise this stretch: C32-C350, C89-C100, C114-C132, C146-C149, C208-C219, and C230-C248. An N-linked (GlcNAc...) asparagine glycan is attached at N99. 3 positions are modified to phosphoserine: S134, S135, and S138. The Cystatin fetuin-A-type 2 domain maps to 144-256 (KLCPDCPLLA…TCTLFQTQPV (113 aa)). N156 and N176 each carry an N-linked (GlcNAc...) asparagine glycan. The segment at 257 to 285 (IPQPQPDGAEAEAPSAVPDAAGPTPSAAG) is disordered. A glycan (O-linked (GalNAc...) serine) is linked at S271. A compositionally biased stretch (low complexity) spans 276 to 285 (AAGPTPSAAG). The O-linked (GalNAc...) threonine glycan is linked to T280. O-linked (GalNAc...) serine glycans are attached at residues S282 and S296. Residue T314 is modified to Phosphothreonine. Residues S316, S320, S323, and S325 each carry the phosphoserine modification. A glycan (O-linked (GalNAc...) threonine) is linked at T334. A glycan (O-linked (GalNAc...) serine; partial) is linked at S341.

It belongs to the fetuin family. Phosphorylated by FAM20C in the extracellular medium. In terms of tissue distribution, liver and bone.

It localises to the secreted. In terms of biological role, promotes endocytosis, possesses opsonic properties and influences the mineral phase of bone. Suggested to have lymphocyte stimulating properties, lipid binding capability and to bind thyroid hormone. This chain is Alpha-2-HS-glycoprotein (AHSG), found in Bos taurus (Bovine).